Consider the following 307-residue polypeptide: Leucine-rich repeat-containing protein 59 (307 aa).

The Cytoplasmic segment spans residues 1 to 247 (MARANGRSQN…LAQRQSRLRK (247 aa)). LRR repeat units follow at residues 10–31 (NLRDKLDGNELDLSLSDLSEVP), 40–61 (KATALDLSCNKLTTLPDDFCNL), 63–84 (HIVRLDLSKNQIVQLPSEFGRL), 86–107 (NLQHLDLLQNHLMSLPVSFAQL), and 109–131 (SLKWLDLKDNPLKPDLAKVAGDC). Residues 156–222 (EIELQRKLQL…LNSNKKAEEE (67 aa)) adopt a coiled-coil conformation. The disordered stretch occupies residues 170-238 (KKKLEAKQRV…RMATPKEKKL (69 aa)). Basic and acidic residues-rich tracts occupy residues 174 to 187 (EAKQRVKEEQEREM) and 194 to 238 (QQKE…EKKL). The helical transmembrane segment at 248–268 (IACILLFGLLVVLLVVVACRF) threads the bilayer. The Lumenal segment spans residues 269 to 307 (TDLKAINMCTSVNAIYKETLSALHSNPVLERFLQDPSSQ).

As to quaternary structure, interacts with SGO1.

Its subcellular location is the microsome membrane. The protein localises to the endoplasmic reticulum membrane. It is found in the nucleus envelope. Functionally, required for nuclear import of FGF1. The chain is Leucine-rich repeat-containing protein 59 (lrrc59) from Xenopus laevis (African clawed frog).